Here is a 115-residue protein sequence, read N- to C-terminus: Basic leucine zipper transcriptional factor ATF-like (115 aa).

Residues Met-1–Ile-57 are disordered. Residues Asp-27 to His-90 form the bZIP domain. Residues Lys-29–Lys-51 are basic motif. The interval Leu-55 to Leu-83 is leucine-zipper.

Belongs to the bZIP family.

It is found in the nucleus. The protein resides in the cytoplasm. Its function is as follows. AP-1 family transcription factor that controls the differentiation of lineage-specific cells in the immune system: specifically mediates the differentiation of T-helper 17 cells (Th17), follicular T-helper cells (TfH), CD8(+) dendritic cells and class-switch recombination (CSR) in B-cells. The sequence is that of Basic leucine zipper transcriptional factor ATF-like (batf) from Xenopus tropicalis (Western clawed frog).